Reading from the N-terminus, the 239-residue chain is Gag polyprotein (239 aa).

A compositionally biased stretch (basic and acidic residues) spans 124 to 141; sequence KGEEVGETTAQRDAKMAP. A disordered region spans residues 124-144; it reads KGEEVGETTAQRDAKMAPEKM. The short motif at 172–175 is the PPXY motif element; it reads PPPY. Residues 184 to 214 are disordered; sequence LAGVGEQQGQGGDTPWGAEQPRAEPGHAGLA.

Its subcellular location is the virion. This chain is Gag polyprotein (ev-1), found in Galliformes.